A 210-amino-acid chain; its full sequence is Urease accessory protein UreF (210 aa).

Belongs to the UreF family. UreD, UreF and UreG form a complex that acts as a GTP-hydrolysis-dependent molecular chaperone, activating the urease apoprotein by helping to assemble the nickel containing metallocenter of UreC. The UreE protein probably delivers the nickel.

The protein resides in the cytoplasm. Functionally, required for maturation of urease via the functional incorporation of the urease nickel metallocenter. This Cereibacter sphaeroides (strain ATCC 17025 / ATH 2.4.3) (Rhodobacter sphaeroides) protein is Urease accessory protein UreF.